The sequence spans 388 residues: Processive diacylglycerol beta-glucosyltransferase (388 aa).

Belongs to the glycosyltransferase 28 family. UgtP subfamily.

It is found in the cell membrane. The enzyme catalyses a 1,2-diacyl-3-O-(beta-D-glucopyranosyl)-sn-glycerol + UDP-alpha-D-glucose = a 1,2-diacyl-3-O-(beta-D-Glc-(1-&gt;6)-beta-D-Glc)-sn-glycerol + UDP + H(+). It carries out the reaction a 1,2-diacyl-3-O-(beta-D-Glc-(1-&gt;6)-beta-D-Glc)-sn-glycerol + UDP-alpha-D-glucose = a 1,2-diacyl-3-O-(beta-D-Glc-(1-&gt;6)-beta-D-Glc-(1-&gt;6)-beta-D-Glc)-sn-glycerol + UDP + H(+). The catalysed reaction is a 1,2-diacyl-sn-glycerol + UDP-alpha-D-glucose = a 1,2-diacyl-3-O-(beta-D-glucopyranosyl)-sn-glycerol + UDP + H(+). Its pathway is glycolipid metabolism; diglucosyl-diacylglycerol biosynthesis. Processive glucosyltransferase involved in the biosynthesis of both the bilayer- and non-bilayer-forming membrane glucolipids. Is able to successively transfer up to three glucosyl residues to diacylglycerol (DAG), thereby catalyzing the formation of beta-monoglucosyl-DAG (3-O-(beta-D-glucopyranosyl)-1,2-diacyl-sn-glycerol), beta-diglucosyl-DAG (3-O-(beta-D-glucopyranosyl-beta-(1-&gt;6)-D-glucopyranosyl)-1,2-diacyl-sn-glycerol) and beta-triglucosyl-DAG (3-O-(beta-D-glucopyranosyl-beta-(1-&gt;6)-D-glucopyranosyl-beta-(1-&gt;6)-D-glucopyranosyl)-1,2-diacyl-sn-glycerol). Beta-diglucosyl-DAG is the predominant glycolipid found in Bacillales and is also used as a membrane anchor for lipoteichoic acid (LTA). The chain is Processive diacylglycerol beta-glucosyltransferase from Bacillus cereus (strain 03BB102).